Reading from the N-terminus, the 442-residue chain is D-serine dehydratase (442 aa).

Lys118 carries the N6-(pyridoxal phosphate)lysine modification.

This sequence belongs to the serine/threonine dehydratase family. DsdA subfamily. In terms of assembly, monomer. Pyridoxal 5'-phosphate is required as a cofactor.

The enzyme catalyses D-serine = pyruvate + NH4(+). The protein is D-serine dehydratase of Escherichia fergusonii (strain ATCC 35469 / DSM 13698 / CCUG 18766 / IAM 14443 / JCM 21226 / LMG 7866 / NBRC 102419 / NCTC 12128 / CDC 0568-73).